The sequence spans 292 residues: Techylectin-5A (292 aa).

The N-terminal stretch at 1–23 is a signal peptide; it reads MHNLRNILFVITLIGQKYGLTSS. Residue glutamine 24 is modified to Pyrrolidone carboxylic acid. The 224-residue stretch at 63–286 folds into the Fibrinogen C-terminal domain; sequence PIVSPDPTDC…QVEMKIRPVE (224 aa). Residues cysteine 72 and cysteine 103 are joined by a disulfide bond. 3 N-linked (GlcNAc...) asparagine glycosylation sites follow: asparagine 173, asparagine 198, and asparagine 214. The Ca(2+) site is built by aspartate 221, histidine 225, and threonine 227. A disulfide bridge links cysteine 229 with cysteine 242.

Multimeric. PubMed:10468566 and PubMed:11707569 are in disagreement about the nature of the multimer, PubMed:10468566 finds hexamers and octamers, the results in PubMed:11707569 suggest tetramers. In terms of tissue distribution, strongly expressed in heart and intestine, weakly expressed in hepatopancreas. Not found in hemocytes, stomach, nervous tissue or skeletal muscle.

Its subcellular location is the secreted. Functionally, lectin involved in innate immunity. Agglutinates all types of human erythrocytes, Gram-positive and Gram-negative bacteria. Has a stronger agglutinating activity towards Gram-negative bacteria than towards Gram-positive bacteria. Specifically recognizes acetyl group-containing substances on agglutinated cells. The hemagglutinating activity was inhibited by EDTA, acetyl group-containing mono- and disaccharides, N-acetyl derivatives of amino acids, other acetyl group-containing substances, propionamide and benzamide. Enhances the antimicrobial activity of big defensin against Gram-positive bacteria but not against Gram-negative bacteria. This Tachypleus tridentatus (Japanese horseshoe crab) protein is Techylectin-5A.